A 389-amino-acid chain; its full sequence is Geranylgeranyl pyrophosphate synthase A (389 aa).

Isopentenyl diphosphate contacts are provided by lysine 99, arginine 102, and histidine 131. Residues aspartate 138 and aspartate 142 each coordinate Mg(2+). Position 147 (arginine 147) interacts with dimethylallyl diphosphate. Arginine 148 provides a ligand contact to isopentenyl diphosphate.

Belongs to the FPP/GGPP synthase family. The cofactor is Mg(2+).

The protein resides in the cytoplasm. It catalyses the reaction isopentenyl diphosphate + (2E)-geranyl diphosphate = (2E,6E)-farnesyl diphosphate + diphosphate. It carries out the reaction isopentenyl diphosphate + (2E,6E)-farnesyl diphosphate = (2E,6E,10E)-geranylgeranyl diphosphate + diphosphate. It functions in the pathway isoprenoid biosynthesis; farnesyl diphosphate biosynthesis; farnesyl diphosphate from geranyl diphosphate and isopentenyl diphosphate: step 1/1. It participates in isoprenoid biosynthesis; geranylgeranyl diphosphate biosynthesis; geranylgeranyl diphosphate from farnesyl diphosphate and isopentenyl diphosphate: step 1/1. Functionally, catalyzes the trans-addition of the 2 molecules of isopentenyl diphosphate (IPP) onto geranyl diphosphate (GDP) to form geranylgeranyl pyrophosphate (GGDP). Does not catalyze the conversion of dimethylallyl diphosphate (DMAPP). This Phomopsis amygdali (Fusicoccum amygdali) protein is Geranylgeranyl pyrophosphate synthase A (GGS-A).